We begin with the raw amino-acid sequence, 548 residues long: Stretch-activated cation channel MID1 (548 aa).

A signal peptide spans 1-20 (MIVWQALFVVYCLFTTSIHG). At 21–341 (LFQDFNPFAN…YLTKKISNGD (321 aa)) the chain is on the extracellular side. Residues Asn-32, Asn-70, Asn-112, Asn-125, Asn-159, Asn-175, Asn-228, Asn-238, Asn-265, Asn-282, Asn-285, Asn-291, and Asn-324 are each glycosylated (N-linked (GlcNAc...) asparagine). Residues 342–358 (GLSSVGGILFSHVYFTT) form a helical membrane-spanning segment. Topologically, residues 359-548 (RSTDVCSLIF…LMVIHPLDDT (190 aa)) are cytoplasmic.

In terms of assembly, forms an oligomer with a molecular mass of 200 kDa by disulfide bonds. Interacts with CCH1 to form a Ca(2+) influx channel. In terms of processing, N-glycosylated.

It is found in the cell membrane. Functionally, calcium-permeable, cation-selective stretch-activated channel (SAC) that functions together with CCH1 to mediate calcium entry into cells. Required during mating. Together with CCH1, essential for tolerance to iron stress, which leads to an increased oxidative poise, and to cold stress. This Saccharomyces cerevisiae (strain ATCC 204508 / S288c) (Baker's yeast) protein is Stretch-activated cation channel MID1 (MID1).